A 723-amino-acid chain; its full sequence is Transmembrane channel-like protein 7 (723 aa).

A disordered region spans residues 1–21 (MSESSASALQLGRPSRQPAVH). The Extracellular segment spans residues 1–168 (MSESSASALQ…GIQSYFSFLR (168 aa)). The N-linked (GlcNAc...) asparagine glycan is linked to Asn-24. The disordered stretch occupies residues 51–70 (RRRTTVHSRDKQSGTLLKST). Asn-84 is a glycosylation site (N-linked (GlcNAc...) asparagine). Ser-89 carries the phosphoserine modification. N-linked (GlcNAc...) asparagine glycosylation is present at Asn-96. The chain crosses the membrane as a helical span at residues 169–189 (FLVLLNLVIFLIIFMLVLLPI). Over 190-219 (LLTKYKITNSSFVLIPFKDTDIQCTVYPVS) the chain is Cytoplasmic. The chain crosses the membrane as a helical span at residues 220 to 240 (SSGLIYFYSYIIDLLSGTGFL). The Extracellular segment spans residues 241–263 (EETSLFYGHYTIDGVKFQNFTYD). Residue Asn-259 is glycosylated (N-linked (GlcNAc...) asparagine). A helical membrane pass occupies residues 264 to 284 (LPLAYLISTIAYLALSLLWIV). Residues 285–362 (KRSVEGFKIN…EETIRIYSLR (78 aa)) lie on the Cytoplasmic side of the membrane. Residues 363 to 383 (LFLNCIVLAVLGACFYAIYVA) form a helical membrane-spanning segment. At 384–404 (TVFSQEHMKKEIDKMVFGENL) the chain is on the extracellular side. The chain crosses the membrane as a helical span at residues 405 to 425 (LILYLPSIVITLANFITPMIF). Topologically, residues 426 to 494 (AKIIRYEDYS…PCWETQVGQE (69 aa)) are cytoplasmic. Residues 495-515 (MYKLMIFDFIIILAVTLFVDF) traverse the membrane as a helical segment. Residues 516-555 (PRKLLVTYCSSWKLIQCWGQQEFAIPDNVLGIVYGQTICW) are Extracellular-facing. A helical transmembrane segment spans residues 556–576 (IGAFFSPLLPAIATLKFIIIF). The Cytoplasmic portion of the chain corresponds to 577 to 601 (YVKEWSLLYTCRPSPRPFRASNSNF). The chain crosses the membrane as a helical span at residues 602–622 (FFLLVLLIGLCLAIIPLTISI). Topologically, residues 623-665 (SRIPSSKACGPFTNFNTTWEVIPKTVSTFPSSLQSFIHGVTSE) are extracellular. Asn-638 is a glycosylation site (N-linked (GlcNAc...) asparagine). Residues 666–686 (AFAVPFFMIICLIMFYFIALA) form a helical membrane-spanning segment. The Cytoplasmic portion of the chain corresponds to 687–723 (GAHKRVVIQLREQLSLESRDKRYLIQKLTEAQRDTRN).

The protein belongs to the TMC family. In terms of assembly, interacts with PIEZO2; the interaction inhibits PIEZO2-conducted mechanically activated currents.

It localises to the membrane. Acts as an inhibitory modulator of PIEZO2 mechanosensitive channel in dorsal root ganglion (DRG) neurons through physical interactions or interference with the interaction between Piezo2 and the cytoskeleton. The protein is Transmembrane channel-like protein 7 (TMC7) of Macaca fascicularis (Crab-eating macaque).